The primary structure comprises 247 residues: 4-hydroxy-tetrahydrodipicolinate reductase (247 aa).

Residues 9–14 (GAAGRM), 76–78 (GTT), and 103–106 (APNF) contribute to the NAD(+) site. His-133 acts as the Proton donor/acceptor in catalysis. His-134 lines the (S)-2,3,4,5-tetrahydrodipicolinate pocket. Lys-137 serves as the catalytic Proton donor. 143 to 144 (GT) contributes to the (S)-2,3,4,5-tetrahydrodipicolinate binding site.

The protein belongs to the DapB family.

It is found in the cytoplasm. It carries out the reaction (S)-2,3,4,5-tetrahydrodipicolinate + NAD(+) + H2O = (2S,4S)-4-hydroxy-2,3,4,5-tetrahydrodipicolinate + NADH + H(+). It catalyses the reaction (S)-2,3,4,5-tetrahydrodipicolinate + NADP(+) + H2O = (2S,4S)-4-hydroxy-2,3,4,5-tetrahydrodipicolinate + NADPH + H(+). It participates in amino-acid biosynthesis; L-lysine biosynthesis via DAP pathway; (S)-tetrahydrodipicolinate from L-aspartate: step 4/4. Catalyzes the conversion of 4-hydroxy-tetrahydrodipicolinate (HTPA) to tetrahydrodipicolinate. In Beutenbergia cavernae (strain ATCC BAA-8 / DSM 12333 / CCUG 43141 / JCM 11478 / NBRC 16432 / NCIMB 13614 / HKI 0122), this protein is 4-hydroxy-tetrahydrodipicolinate reductase.